We begin with the raw amino-acid sequence, 410 residues long: Zinc finger protein 322 (410 aa).

C2H2-type zinc fingers lie at residues 81 to 103 (YRCDMCEKTFIQSSDLISHQRIH), 109 to 131 (YKCSKCEKSFWHHLALSGHQRTH), 137 to 159 (YTCDICGKNFGQSSDLLVHQRSH), 165 to 187 (YLCNECDKCFSRSTNLIRHRRTH), 193 to 215 (FKCLECEKAFSGKSDLISHQRTH), 221 to 243 (YKCNKCEKSYRHRSAFIVHKRVH), 249 to 271 (YKCGACEKCFGQKSDLIVHQRVH), and 277 to 299 (YKCLECMRSFTRSANLIRHQATH). The C2H2-type 9; degenerate zinc finger occupies 303-325 (FKCLEYEKSFNCSSDFIVHQRIH). Residues 361–383 (YKYSVCDKTFHHSSALLQHQTVH) form a C2H2-type 10; degenerate zinc finger. Serine 400 carries the post-translational modification Phosphoserine.

It belongs to the krueppel C2H2-type zinc-finger protein family. As to quaternary structure, interacts with POU5F1.

The protein resides in the nucleus. Its subcellular location is the cytoplasm. Transcriptional activator. Important for maintenance of pluripotency in embryonic stem cells. Binds directly to the POU5F1 distal enhancer and the NANOG proximal promoter, and enhances expression of both genes. Can also bind to numerous other gene promoters and regulates expression of many other pluripotency factors, either directly or indirectly. Promotes inhibition of MAPK signaling during embryonic stem cell differentiation. This Mus musculus (Mouse) protein is Zinc finger protein 322 (Znf322).